The sequence spans 158 residues: Large ribosomal subunit protein uL22 (158 aa).

This sequence belongs to the universal ribosomal protein uL22 family. As to quaternary structure, part of the 50S ribosomal subunit.

Its function is as follows. This protein binds specifically to 23S rRNA. It makes multiple contacts with different domains of the 23S rRNA in the assembled 50S subunit and ribosome. In terms of biological role, the globular domain of the protein is located near the polypeptide exit tunnel on the outside of the subunit, while an extended beta-hairpin is found that lines the wall of the exit tunnel in the center of the 70S ribosome. This Haloquadratum walsbyi (strain DSM 16790 / HBSQ001) protein is Large ribosomal subunit protein uL22.